A 59-amino-acid chain; its full sequence is Temporin-CDYd (59 aa).

An N-terminal signal peptide occupies residues 1 to 22; that stretch reads MFTLKKSMLLLLFLGTISLTLC. Residues 23-42 constitute a propeptide that is removed on maturation; the sequence is EEERDANEEEENGGEVKEEE.

This sequence belongs to the frog skin active peptide (FSAP) family. Temporin subfamily. Expressed by the skin glands.

It localises to the secreted. In terms of biological role, antimicrobial peptide. In Rana dybowskii (Dybovsky's frog), this protein is Temporin-CDYd.